The chain runs to 267 residues: Methylglyoxal reductase DkgB (267 aa).

Y39 acts as the Proton donor in catalysis. H97 is a substrate binding site. 179-231 (MTLAYGKALKDEVIARIAAKHNATPAQVILAWAMGEGYSVIPSSTRRENLASS) is an NADP(+) binding site.

It belongs to the aldo/keto reductase family. In terms of assembly, monomer.

Its subcellular location is the cytoplasm. The enzyme catalyses hydroxyacetone + NADP(+) = methylglyoxal + NADPH + H(+). In terms of biological role, aldo-keto reductase that significantly contributes to cellular methylglyoxal detoxification by catalyzing the NADPH-dependent conversion of methylglyoxal to acetol. The protein is Methylglyoxal reductase DkgB of Salmonella typhimurium (strain LT2 / SGSC1412 / ATCC 700720).